The primary structure comprises 115 residues: UPF0122 protein NT01CX_2214 (115 aa).

This sequence belongs to the UPF0122 family.

Might take part in the signal recognition particle (SRP) pathway. This is inferred from the conservation of its genetic proximity to ftsY/ffh. May be a regulatory protein. The protein is UPF0122 protein NT01CX_2214 of Clostridium novyi (strain NT).